The chain runs to 263 residues: Orotidine 5'-phosphate decarboxylase (263 aa).

Substrate is bound by residues aspartate 38, 60–62 (KTH), 91–100 (DRKFADIGNT), tyrosine 213, and arginine 232. Lysine 93 (proton donor) is an active-site residue.

It belongs to the OMP decarboxylase family.

The catalysed reaction is orotidine 5'-phosphate + H(+) = UMP + CO2. It functions in the pathway pyrimidine metabolism; UMP biosynthesis via de novo pathway; UMP from orotate: step 2/2. This is Orotidine 5'-phosphate decarboxylase (PYR4) from Rhizomucor pusillus.